The sequence spans 462 residues: Alanine racemase (462 aa).

Lysine 34 acts as the Proton acceptor; specific for D-alanine in catalysis. Lysine 34 bears the N6-(pyridoxal phosphate)lysine mark. The unknown insert stretch occupies residues 73–132 (ASWHESVFRHCEKNYTVIRRSNPVKNSVSQNFFNYFSGLQQCFAPRNDGSSIHATTPKAL). Arginine 193 lines the substrate pocket. The RPE1 insert domain maps to 286–332 (DLSNNLSYKEEFEGDTERRTAAYINVREDSSTGSTYKLPLEGGYSRG). Tyrosine 357 functions as the Proton acceptor; specific for L-alanine in the catalytic mechanism. Residue methionine 405 participates in substrate binding.

The protein belongs to the alanine racemase family. The cofactor is pyridoxal 5'-phosphate.

It catalyses the reaction L-alanine = D-alanine. It functions in the pathway amino-acid biosynthesis; D-alanine biosynthesis; D-alanine from L-alanine: step 1/1. Its function is as follows. Catalyzes the interconversion of L-alanine and D-alanine. May also act on other amino acids. This Rickettsia felis (strain ATCC VR-1525 / URRWXCal2) (Rickettsia azadi) protein is Alanine racemase (alr).